A 90-amino-acid polypeptide reads, in one-letter code: UPF0298 protein BLi01717/BL02989 (90 aa).

It belongs to the UPF0298 family.

Its subcellular location is the cytoplasm. The polypeptide is UPF0298 protein BLi01717/BL02989 (Bacillus licheniformis (strain ATCC 14580 / DSM 13 / JCM 2505 / CCUG 7422 / NBRC 12200 / NCIMB 9375 / NCTC 10341 / NRRL NRS-1264 / Gibson 46)).